Here is a 193-residue protein sequence, read N- to C-terminus: mRNA 3'-end-processing protein YTH1 (193 aa).

5 C3H1-type zinc fingers span residues 24 to 52, 54 to 81, 82 to 110, 111 to 138, and 140 to 162; these read DPNR…HLAP, FLNK…HEYN, LQKM…HIDP, ASKI…HIRR, and PCEL…HPKF.

Belongs to the CPSF4/YTH1 family.

It localises to the nucleus. Component of the cleavage factor I (CF I) involved in pre-mRNA 3'-end processing. This Yarrowia lipolytica (strain CLIB 122 / E 150) (Yeast) protein is mRNA 3'-end-processing protein YTH1 (YTH1).